The chain runs to 81 residues: Large ribosomal subunit protein bL31B (81 aa).

This sequence belongs to the bacterial ribosomal protein bL31 family. Type B subfamily. Part of the 50S ribosomal subunit.

This is Large ribosomal subunit protein bL31B from Halalkalibacterium halodurans (strain ATCC BAA-125 / DSM 18197 / FERM 7344 / JCM 9153 / C-125) (Bacillus halodurans).